The sequence spans 379 residues: Cytochrome b (379 aa).

Transmembrane regions (helical) follow at residues 34–54 (FGSLLGICLITQILTGLLLAM), 78–99 (WLIRNLHANGASFFFICIYLHI), 114–134 (WNTGVILLLTLMATAFVGYVL), and 179–199 (FFALHFLLPFLIAGITIIHLT). Heme b contacts are provided by H84 and H98. H183 and H197 together coordinate heme b. Residue H202 coordinates a ubiquinone. 4 consecutive transmembrane segments (helical) span residues 227 to 247 (LKDILGFTLMFIPLLILAFFS), 289 to 309 (LGGVLALAASVLILFLIPFLH), 321 to 341 (LSQMLFWLLVANLLILTWIGS), and 348 to 368 (FIIIGQTASFTYFLILLILFP).

Belongs to the cytochrome b family. In terms of assembly, the cytochrome bc1 complex contains 11 subunits: 3 respiratory subunits (MT-CYB, CYC1 and UQCRFS1), 2 core proteins (UQCRC1 and UQCRC2) and 6 low-molecular weight proteins (UQCRH/QCR6, UQCRB/QCR7, UQCRQ/QCR8, UQCR10/QCR9, UQCR11/QCR10 and a cleavage product of UQCRFS1). This cytochrome bc1 complex then forms a dimer. Heme b serves as cofactor.

It localises to the mitochondrion inner membrane. Component of the ubiquinol-cytochrome c reductase complex (complex III or cytochrome b-c1 complex) that is part of the mitochondrial respiratory chain. The b-c1 complex mediates electron transfer from ubiquinol to cytochrome c. Contributes to the generation of a proton gradient across the mitochondrial membrane that is then used for ATP synthesis. The chain is Cytochrome b (MT-CYB) from Dromaius novaehollandiae (Emu).